A 92-amino-acid polypeptide reads, in one-letter code: Progonadoliberin-1 (92 aa).

An N-terminal signal peptide occupies residues 1-23; the sequence is MGLIPKLLAGLVLLTLCVENGSG. At Q24 the chain carries Pyrrolidone carboxylic acid. Glycine amide is present on G33.

The protein belongs to the GnRH family. The precursor is cleaved by ACE, which removes the Gly-Lys-Arg peptide at the C-terminus, leading to mature hormone. The mature form of Gonadoliberin-1 is also cleaved and degraded by ACE.

Its subcellular location is the secreted. Its function is as follows. Stimulates the secretion of gonadotropins; it stimulates the secretion of both luteinizing and follicle-stimulating hormones. In Cavia porcellus (Guinea pig), this protein is Progonadoliberin-1 (GNRH1).